The primary structure comprises 43 residues: Protein PsbN (43 aa).

A helical transmembrane segment spans residues 4–24; that stretch reads GILIVIFISCLLVSFTGYAVY.

This sequence belongs to the PsbN family.

Its subcellular location is the plastid. It is found in the chloroplast thylakoid membrane. In terms of biological role, may play a role in photosystem I and II biogenesis. The sequence is that of Protein PsbN from Coleochaete orbicularis (Charophycean green alga).